The following is a 33-amino-acid chain: MEQVADFDTIYQAMIQISVVLCFALGIIAGGQR.

Residues 10–30 (IYQAMIQISVVLCFALGIIAG) traverse the membrane as a helical segment.

Belongs to the inovirus G7P protein family.

The protein resides in the virion. The protein localises to the host membrane. In terms of biological role, may initiate with G9P the virion concomitant assembly-budding process, by interacting with the packaging signal of the viral genome. The assembly-budding takes place at the host inner membrane. In turn, G7P and G9P are present at the end of the filamentous virion that emerges first from the bacterial host. This is Tail virion protein G7P (VII) from Escherichia coli (Bacteriophage f1).